The primary structure comprises 178 residues: Acireductone dioxygenase 1 (178 aa).

Positions 84, 86, 90, and 130 each coordinate Fe(2+). Ni(2+) contacts are provided by His84, His86, Glu90, and His130.

Belongs to the acireductone dioxygenase (ARD) family. The cofactor is Fe(2+). Ni(2+) serves as cofactor.

Its subcellular location is the cytoplasm. It is found in the nucleus. It catalyses the reaction 1,2-dihydroxy-5-(methylsulfanyl)pent-1-en-3-one + O2 = 4-methylsulfanyl-2-oxobutanoate + formate + 2 H(+). The enzyme catalyses 1,2-dihydroxy-5-(methylsulfanyl)pent-1-en-3-one + O2 = 3-(methylsulfanyl)propanoate + CO + formate + 2 H(+). It functions in the pathway amino-acid biosynthesis; L-methionine biosynthesis via salvage pathway; L-methionine from S-methyl-5-thio-alpha-D-ribose 1-phosphate: step 5/6. Its function is as follows. Catalyzes 2 different reactions between oxygen and the acireductone 1,2-dihydroxy-3-keto-5-methylthiopentene (DHK-MTPene) depending upon the metal bound in the active site. Fe-containing acireductone dioxygenase (Fe-ARD) produces formate and 2-keto-4-methylthiobutyrate (KMTB), the alpha-ketoacid precursor of methionine in the methionine recycle pathway. Ni-containing acireductone dioxygenase (Ni-ARD) produces methylthiopropionate, carbon monoxide and formate, and does not lie on the methionine recycle pathway. In Coprinopsis cinerea (strain Okayama-7 / 130 / ATCC MYA-4618 / FGSC 9003) (Inky cap fungus), this protein is Acireductone dioxygenase 1.